A 280-amino-acid polypeptide reads, in one-letter code: Sulfur carrier protein FdhD (280 aa).

Cysteine 121 (cysteine persulfide intermediate) is an active-site residue. 258–263 (FSRPGR) lines the Mo-bis(molybdopterin guanine dinucleotide) pocket.

Belongs to the FdhD family.

Its subcellular location is the cytoplasm. Its function is as follows. Required for formate dehydrogenase (FDH) activity. Acts as a sulfur carrier protein that transfers sulfur from IscS to the molybdenum cofactor prior to its insertion into FDH. This Cronobacter sakazakii (strain ATCC BAA-894) (Enterobacter sakazakii) protein is Sulfur carrier protein FdhD.